The sequence spans 320 residues: Glutathione synthetase (320 aa).

Residues 133–317 (KMYTLQFAAV…LGEKVICWLE (185 aa)) form the ATP-grasp domain. Residue 159–215 (LEEHGAAVLKPLGGKAGEGILFLDPGDRNFNSLVEISTQHGKEPVMVQRFLPEAKEG) participates in ATP binding. Residues glutamate 288 and asparagine 290 each contribute to the Mg(2+) site.

Belongs to the prokaryotic GSH synthase family. The cofactor is Mg(2+). Mn(2+) is required as a cofactor.

The enzyme catalyses gamma-L-glutamyl-L-cysteine + glycine + ATP = glutathione + ADP + phosphate + H(+). It functions in the pathway sulfur metabolism; glutathione biosynthesis; glutathione from L-cysteine and L-glutamate: step 2/2. This is Glutathione synthetase from Synechocystis sp. (strain ATCC 27184 / PCC 6803 / Kazusa).